Here is a 324-residue protein sequence, read N- to C-terminus: Esterase FPSE_08126 (324 aa).

Catalysis depends on residues Ser-156, Asp-255, and His-285.

This sequence belongs to the AB hydrolase 3 family.

Its function is as follows. Esterase; part of the Fusarium detoxification of benzoxazolinone cluster involved in the degradation of benzoxazolinones produced by the host plant. Maize, wheat, and rye produce the 2 benzoxazinone phytoanticipins 2,4-dihy-droxy-7-methoxy-1,4-benzoxazin-3-one (DIMBOA) and 2,4-dihydroxy-1,4-benzoxazin-3-one (DIBOA) that, due to their inherent instability once released, spontaneously degrade to the more stable corresponding benzoxazolinones, 6-methoxy-2-benzoxazolinone (MBOA) and 2-benzoxazolinone (BOA), respectively. The first step in the detoxification of benzoxazolinones involves the hydrolysis of the cyclic ester bond of benzoxazolinones by the gamma-lactamase FDB1 to aminophenols. FDB1 is able to convert 2-benzoxazolinone (BOA) into 2-aminophenol (2-AP), as well as 6-methoxy-2-benzoxazolinone (MBOA) into 5-methoxy-2-aminophenol (2-AMP). The N-malonyltransferase FDB2 then metabolizes aminophenols via N-malonylation to non-toxic malonamic acids. FDB2 converts 2-AP into N-(2-hydroxyphenyl) malonamic acid (HPMA) and 2-AMP into N-(2-hydroxy-4-methoxyphenyl) malonamic acid (HMPMA). The cluster also contains 2 transcription factors (FDB3 and FPSE_08121), an aldo-keto reductase (FPSE_08125) that possibly associates with a ketone component of BOA and MBOA degradation, an esterase (FPSE_08126), an acyl-CoA transferase (FPSE_08120), a solute carrier protein (FPSE_08119) and a transmembrane transporter (FPSE_08127) proposed to shuttle metabolites of benzoxazolinone degradation. The polypeptide is Esterase FPSE_08126 (Fusarium pseudograminearum (strain CS3096) (Wheat and barley crown-rot fungus)).